The primary structure comprises 73 residues: Translation initiation factor IF-1 (73 aa).

In terms of domain architecture, S1-like spans 1–73 (MAKKDGAIEV…SRGRIVYRYK (73 aa)).

The protein belongs to the IF-1 family. In terms of assembly, component of the 30S ribosomal translation pre-initiation complex which assembles on the 30S ribosome in the order IF-2 and IF-3, IF-1 and N-formylmethionyl-tRNA(fMet); mRNA recruitment can occur at any time during PIC assembly.

The protein resides in the cytoplasm. In terms of biological role, one of the essential components for the initiation of protein synthesis. Stabilizes the binding of IF-2 and IF-3 on the 30S subunit to which N-formylmethionyl-tRNA(fMet) subsequently binds. Helps modulate mRNA selection, yielding the 30S pre-initiation complex (PIC). Upon addition of the 50S ribosomal subunit IF-1, IF-2 and IF-3 are released leaving the mature 70S translation initiation complex. In Mycolicibacterium smegmatis (strain ATCC 700084 / mc(2)155) (Mycobacterium smegmatis), this protein is Translation initiation factor IF-1.